Consider the following 180-residue polypeptide: MSIDSLKDKLPDFAKDVRLNLSNIANDDTLGEQTKYGLMLACAVATRNAEVLKAFDQECTPHLAPAARDAALAAATIMAMNNVYYRFVHLASNKAYGTLPAKLRMNIIGNPGVPKTDFELWSLAVSAINGCGMCIDSHEKVLLNADTTQDTIQTAVRFAAIIQSTAVALEAASLPVSAAS.

Cys131 serves as the catalytic Proton donor. A disulfide bond links Cys131 and Cys134. The active-site Cysteine sulfenic acid (-SOH) intermediate is Cys134.

This sequence belongs to the AhpD family.

The catalysed reaction is N(6)-[(R)-dihydrolipoyl]-L-lysyl-[lipoyl-carrier protein] + a hydroperoxide = N(6)-[(R)-lipoyl]-L-lysyl-[lipoyl-carrier protein] + an alcohol + H2O. Its function is as follows. Antioxidant protein with alkyl hydroperoxidase activity. Required for the reduction of the AhpC active site cysteine residues and for the regeneration of the AhpC enzyme activity. This Beijerinckia indica subsp. indica (strain ATCC 9039 / DSM 1715 / NCIMB 8712) protein is Alkyl hydroperoxide reductase AhpD.